Reading from the N-terminus, the 498-residue chain is ATP synthase subunit beta, chloroplastic (498 aa).

Position 6 is a phosphothreonine (Thr6). Ser13 bears the Phosphoserine mark. Residue 172–179 (GGAGVGKT) participates in ATP binding.

This sequence belongs to the ATPase alpha/beta chains family. F-type ATPases have 2 components, CF(1) - the catalytic core - and CF(0) - the membrane proton channel. CF(1) has five subunits: alpha(3), beta(3), gamma(1), delta(1), epsilon(1). CF(0) has four main subunits: a(1), b(1), b'(1) and c(9-12).

The protein resides in the plastid. It localises to the chloroplast thylakoid membrane. It carries out the reaction ATP + H2O + 4 H(+)(in) = ADP + phosphate + 5 H(+)(out). Its function is as follows. Produces ATP from ADP in the presence of a proton gradient across the membrane. The catalytic sites are hosted primarily by the beta subunits. This chain is ATP synthase subunit beta, chloroplastic, found in Arabis hirsuta (Hairy rock-cress).